A 144-amino-acid chain; its full sequence is MKTFMAKSHVIKKTWYIIDAKHKILGRLSTVISRYLIGKHKIEYAPHVDIGDYVIVLNAKEVSVSGHKRDDKIYYHHTGYIGGIKQLNFKRMINRYPEKVIEIAVKGMLPKGPLGRMMYCRLRVYSGNVHAHAAQEPQFIDIDC.

It belongs to the universal ribosomal protein uL13 family. Part of the 50S ribosomal subunit.

This protein is one of the early assembly proteins of the 50S ribosomal subunit, although it is not seen to bind rRNA by itself. It is important during the early stages of 50S assembly. In Blochmanniella pennsylvanica (strain BPEN), this protein is Large ribosomal subunit protein uL13.